Here is a 665-residue protein sequence, read N- to C-terminus: Fructose-1,6-bisphosphatase class 3 (665 aa).

This sequence belongs to the FBPase class 3 family. Mn(2+) serves as cofactor.

The catalysed reaction is beta-D-fructose 1,6-bisphosphate + H2O = beta-D-fructose 6-phosphate + phosphate. It functions in the pathway carbohydrate biosynthesis; gluconeogenesis. In Clostridium acetobutylicum (strain ATCC 824 / DSM 792 / JCM 1419 / IAM 19013 / LMG 5710 / NBRC 13948 / NRRL B-527 / VKM B-1787 / 2291 / W), this protein is Fructose-1,6-bisphosphatase class 3.